Consider the following 86-residue polypeptide: Large ribosomal subunit protein bL27 (86 aa).

Residues 1 to 11 (MATKKAGGGSR) are compositionally biased toward gly residues. A disordered region spans residues 1-24 (MATKKAGGGSRNGRDSAGRRLGVK).

This sequence belongs to the bacterial ribosomal protein bL27 family.

This is Large ribosomal subunit protein bL27 from Rickettsia africae (strain ESF-5).